The primary structure comprises 1027 residues: Kinesin heavy chain isoform 5A (1027 aa).

The residue at position 2 (alanine 2) is an N-acetylalanine. One can recognise a Kinesin motor domain in the interval 9 to 327 (SIKVLCRFRP…LMFGQRAKTI (319 aa)). Residue 86 to 93 (GQTSSGKT) coordinates ATP. The microtubule-binding stretch occupies residues 174–315 (VSSPEEILDV…PSSYNDAETK (142 aa)). Positions 271-361 (EGTKSYVPYR…KTKAQKETIA (91 aa)) are necessary for interaction with ZFYVE27. Residues 331 to 905 (ASVNLELTAE…EVDRIKEAVR (575 aa)) adopt a coiled-coil conformation. The tract at residues 353-1027 (TKAQKETIAK…FPLHQETAAS (675 aa)) is interaction with BICD2. Position 397 is a phosphothreonine (threonine 397). Residues 906 to 936 (YKSSGKRGHSAQIAKPVRPGHYPASSPTNPY) are disordered. A globular region spans residues 907-1027 (KSSGKRGHSA…FPLHQETAAS (121 aa)).

It belongs to the TRAFAC class myosin-kinesin ATPase superfamily. Kinesin family. Kinesin subfamily. Oligomer composed of two heavy chains and two light chains. Interacts with GRIP1. Interacts with FMR1 (via C-terminus); this interaction is increased in a mGluR-dependent manner. Interacts with BORCS5. Interacts with ZFYVE27. Interacts with VAPA, VAPB, SURF4, RAB11A (GDP-bound form), RAB11B (GDP-bound form) and RTN3 in a ZFYVE27-dependent manner. Interacts with BICD2. Interacts with DTNB. In terms of tissue distribution, expressed in brain.

It is found in the cytoplasm. Its subcellular location is the perinuclear region. The protein resides in the cytoskeleton. It localises to the perikaryon. The enzyme catalyses ATP + H2O + a kinesin associated with a microtubule at position (n) = ADP + phosphate a kinesin associated with a microtubule at position (n+1, toward the plus end).. Functionally, microtubule-dependent motor required for slow axonal transport of neurofilament proteins (NFH, NFM and NFL). Can induce formation of neurite-like membrane protrusions in non-neuronal cells in a ZFYVE27-dependent manner. The ZFYVE27-KIF5A complex contributes to the vesicular transport of VAPA, VAPB, SURF4, RAB11A, RAB11B and RTN3 proteins in neurons. Required for anterograde axonal transportation of MAPK8IP3/JIP3 which is essential for MAPK8IP3/JIP3 function in axon elongation. The chain is Kinesin heavy chain isoform 5A from Rattus norvegicus (Rat).